Consider the following 469-residue polypeptide: MKKKVIDFIKENSMIKNGDKVLVALSGGPDSVCLLHILSELRELLHIEVYAAHVNHCLRGESALKDEAYVEELCKNLNIKCFVKRVDINKISEEQNISTEMAGREERYKFFEELKNEYSLDKIAIAHNANDQAETLIMRALRGTGIEGLVGIKPVRDGIFIRPILILRRKEIEEYCEINNLNPRIDETNLEEIYSRNKIRLKAIPFIEENFNPDIVATLNRLAYSCSKDVEFIQEEVEKRFPKLCIKENHSILIKEEAFNEKEALLTRIIKKALFEVSSKHNNFELKHIQDIIALKDKGTGKQINITNGVIALNEYGDIRIKLVDSKKAKENKVLNLENIKDELDKNQKVVIEDDILGNYELIVEDLKKGEKFSKDRFIKSFDYDKISNIDIRFRQNGDKIIPLGMKSSKKLKDIFINNKIPKEERDFIPLVLFNNEIAWIVGSNVSETFKVTNKTKKVIKITFKGKEN.

Position 26–31 (26–31 (SGGPDS)) interacts with ATP.

This sequence belongs to the tRNA(Ile)-lysidine synthase family.

Its subcellular location is the cytoplasm. It catalyses the reaction cytidine(34) in tRNA(Ile2) + L-lysine + ATP = lysidine(34) in tRNA(Ile2) + AMP + diphosphate + H(+). Ligates lysine onto the cytidine present at position 34 of the AUA codon-specific tRNA(Ile) that contains the anticodon CAU, in an ATP-dependent manner. Cytidine is converted to lysidine, thus changing the amino acid specificity of the tRNA from methionine to isoleucine. This Clostridium perfringens (strain ATCC 13124 / DSM 756 / JCM 1290 / NCIMB 6125 / NCTC 8237 / Type A) protein is tRNA(Ile)-lysidine synthase.